The following is a 503-amino-acid chain: Pentatricopeptide repeat-containing protein At2g30100, chloroplastic (503 aa).

The transit peptide at 1–50 (MAYAHVFASLTISTISLRRFLPRLHRNHSVKPNSRIICNLKLNYSAGKFR) directs the protein to the chloroplast. 3 PPR repeats span residues 341 to 375 (IGVV…GREP), 376 to 410 (EADL…GSQR), and 411 to 445 (KKKT…GLHP).

It belongs to the PPR family. P subfamily.

Its subcellular location is the plastid. The protein localises to the chloroplast. This Arabidopsis thaliana (Mouse-ear cress) protein is Pentatricopeptide repeat-containing protein At2g30100, chloroplastic.